The sequence spans 252 residues: Ribonuclease HII (252 aa).

One can recognise an RNase H type-2 domain in the interval 68–252 (EYVAGLDEVG…FGPVRDRLRS (185 aa)). A divalent metal cation-binding residues include aspartate 74, glutamate 75, and aspartate 165.

Belongs to the RNase HII family. Requires Mn(2+) as cofactor. It depends on Mg(2+) as a cofactor.

Its subcellular location is the cytoplasm. The enzyme catalyses Endonucleolytic cleavage to 5'-phosphomonoester.. Endonuclease that specifically degrades the RNA of RNA-DNA hybrids. This is Ribonuclease HII from Lacticaseibacillus paracasei (strain ATCC 334 / BCRC 17002 / CCUG 31169 / CIP 107868 / KCTC 3260 / NRRL B-441) (Lactobacillus paracasei).